Consider the following 906-residue polypeptide: Protein translocase subunit SecA (906 aa).

Residues glutamine 86, 104–108 (GEGKT), and aspartate 511 contribute to the ATP site. Composition is skewed to basic and acidic residues over residues 853–865 (HESV…RHDE) and 877–888 (VRREGPKVKRND). The tract at residues 853 to 906 (HESVIDNNQRHDEDEQEEAPKVQQVRREGPKVKRNDPCPCGSGKKYKQCHSKVE) is disordered. Zn(2+) is bound by residues cysteine 890, cysteine 892, cysteine 901, and histidine 902. The span at 896–906 (KKYKQCHSKVE) shows a compositional bias: basic residues.

This sequence belongs to the SecA family. As to quaternary structure, monomer and homodimer. Part of the essential Sec protein translocation apparatus which comprises SecA, SecYEG and auxiliary proteins SecDF-YajC and YidC. It depends on Zn(2+) as a cofactor.

The protein localises to the cell inner membrane. Its subcellular location is the cytoplasm. The catalysed reaction is ATP + H2O + cellular proteinSide 1 = ADP + phosphate + cellular proteinSide 2.. In terms of biological role, part of the Sec protein translocase complex. Interacts with the SecYEG preprotein conducting channel. Has a central role in coupling the hydrolysis of ATP to the transfer of proteins into and across the cell membrane, serving both as a receptor for the preprotein-SecB complex and as an ATP-driven molecular motor driving the stepwise translocation of polypeptide chains across the membrane. The protein is Protein translocase subunit SecA of Francisella tularensis subsp. tularensis (strain WY96-3418).